Reading from the N-terminus, the 102-residue chain is Acid shock protein (102 aa).

A signal peptide spans 1 to 21 (MKKVLALVVAAAMGLSSAAFA). The span at 22–41 (AETATTPAPTATTTKAAPAK) shows a compositional bias: low complexity. A propeptide spanning residues 22-58 (AETATTPAPTATTTKAAPAKTTHHKKQHKAAPAQKAQ) is cleaved from the precursor. Residues 22-102 (AETATTPAPT…PAKPAAQPAA (81 aa)) are disordered. Positions 80 to 90 (AAKKHARKHSH) are enriched in basic residues. Low complexity predominate over residues 91–102 (QQPAKPAAQPAA).

Belongs to the Asr family. Proteolytic processing gives rise to the active protein.

The protein localises to the periplasm. Its function is as follows. Required for growth and/or survival at acidic conditions. The sequence is that of Acid shock protein from Escherichia coli O127:H6 (strain E2348/69 / EPEC).